The sequence spans 166 residues: Putative transcriptional regulatory protein for hcr operon (166 aa).

The HTH marR-type domain maps to 1-155; the sequence is MRKHRGKPAN…LIGLLKRLYR (155 aa).

In terms of biological role, may be involved in the regulation of genes for 4-hydroxybenzoyl-CoA reductase. This is Putative transcriptional regulatory protein for hcr operon from Thauera aromatica.